A 117-amino-acid polypeptide reads, in one-letter code: Large ribosomal subunit protein eL34 (117 aa).

The protein belongs to the eukaryotic ribosomal protein eL34 family. As to quaternary structure, component of the large ribosomal subunit.

It localises to the cytoplasm. It is found in the cytosol. Its subcellular location is the endoplasmic reticulum. Its function is as follows. Component of the large ribosomal subunit. The ribosome is a large ribonucleoprotein complex responsible for the synthesis of proteins in the cell. The chain is Large ribosomal subunit protein eL34 (rpl34) from Danio rerio (Zebrafish).